Here is a 454-residue protein sequence, read N- to C-terminus: Probable glycine dehydrogenase (decarboxylating) subunit 1 (454 aa).

It belongs to the GcvP family. N-terminal subunit subfamily. The glycine cleavage system is composed of four proteins: P, T, L and H. In this organism, the P 'protein' is a heterodimer of two subunits.

The enzyme catalyses N(6)-[(R)-lipoyl]-L-lysyl-[glycine-cleavage complex H protein] + glycine + H(+) = N(6)-[(R)-S(8)-aminomethyldihydrolipoyl]-L-lysyl-[glycine-cleavage complex H protein] + CO2. The glycine cleavage system catalyzes the degradation of glycine. The P protein binds the alpha-amino group of glycine through its pyridoxal phosphate cofactor; CO(2) is released and the remaining methylamine moiety is then transferred to the lipoamide cofactor of the H protein. In Sorangium cellulosum (strain So ce56) (Polyangium cellulosum (strain So ce56)), this protein is Probable glycine dehydrogenase (decarboxylating) subunit 1.